Consider the following 419-residue polypeptide: C2 calcium-dependent domain-containing protein 4C (419 aa).

Disordered stretches follow at residues 1-96 (MRKT…LASE), 115-136 (EDWTAEEATNADPQAQGAMSLP), 151-225 (AESP…SPFG), and 247-300 (VSQL…HTVK). Positions 75–94 (LASPGPRRAPRSPRLPAKLA) are enriched in low complexity. Positions 186–196 (KGNGGDGGSRE) are enriched in gly residues. Polar residues predominate over residues 212-225 (ESDTGSSAESSPFG). 3 positions are modified to phosphoserine: Ser259, Ser261, and Ser270. Residues 303–419 (TRGSVRLLAE…LPLTSLLPFL (117 aa)) enclose the C2 domain.

The protein belongs to the C2CD4 family.

The protein is C2 calcium-dependent domain-containing protein 4C (C2cd4c) of Mus musculus (Mouse).